Consider the following 148-residue polypeptide: Endoribonuclease YbeY (148 aa).

Zn(2+)-binding residues include H113, H117, and H123.

The protein belongs to the endoribonuclease YbeY family. Zn(2+) is required as a cofactor.

It is found in the cytoplasm. In terms of biological role, single strand-specific metallo-endoribonuclease involved in late-stage 70S ribosome quality control and in maturation of the 3' terminus of the 16S rRNA. The sequence is that of Endoribonuclease YbeY from Borrelia recurrentis (strain A1).